The sequence spans 429 residues: Adenylosuccinate synthetase (429 aa).

Residues 12 to 18 and 40 to 42 each bind GTP; these read GDEGKGK and GHT. Aspartate 13 functions as the Proton acceptor in the catalytic mechanism. Residues aspartate 13 and glycine 40 each coordinate Mg(2+). Residues 13–16, 38–41, threonine 129, arginine 143, glutamine 223, threonine 238, and arginine 302 contribute to the IMP site; these read DEGK and NAGH. Histidine 41 acts as the Proton donor in catalysis. 298-304 provides a ligand contact to substrate; that stretch reads TVTGRKR. GTP contacts are provided by residues arginine 304, 330–332, and 412–414; these read KLD and STS.

It belongs to the adenylosuccinate synthetase family. Homodimer. The cofactor is Mg(2+).

Its subcellular location is the cytoplasm. The enzyme catalyses IMP + L-aspartate + GTP = N(6)-(1,2-dicarboxyethyl)-AMP + GDP + phosphate + 2 H(+). The protein operates within purine metabolism; AMP biosynthesis via de novo pathway; AMP from IMP: step 1/2. In terms of biological role, plays an important role in the de novo pathway of purine nucleotide biosynthesis. Catalyzes the first committed step in the biosynthesis of AMP from IMP. The protein is Adenylosuccinate synthetase of Rhizorhabdus wittichii (strain DSM 6014 / CCUG 31198 / JCM 15750 / NBRC 105917 / EY 4224 / RW1) (Sphingomonas wittichii).